Reading from the N-terminus, the 142-residue chain is ATP synthase epsilon chain (142 aa).

It belongs to the ATPase epsilon chain family. As to quaternary structure, F-type ATPases have 2 components, CF(1) - the catalytic core - and CF(0) - the membrane proton channel. CF(1) has five subunits: alpha(3), beta(3), gamma(1), delta(1), epsilon(1). CF(0) has three main subunits: a, b and c.

Its subcellular location is the cell inner membrane. Produces ATP from ADP in the presence of a proton gradient across the membrane. This Pasteurella multocida (strain Pm70) protein is ATP synthase epsilon chain.